Consider the following 662-residue polypeptide: p-hydroxybenzoic acid efflux pump subunit AaeB (662 aa).

11 helical membrane-spanning segments follow: residues 22–42 (FAFKLSFAIVLSLFLGFHLQL), 52–72 (AAIVAAGPAFAAGGEPFSGAI), 76–96 (GMLRVVGTFIGCIGALIIIIA), 102–122 (VVMLMLCCIWAGLCTWVSSLV), 129–149 (VFGLAGYTTLIIIVSTQGTPL), 161–181 (EIVLGIVCAILADLLFSPRSI), 378–398 (LFWLSTGWTSGSVCMVMIAVV), 415–435 (FLFGTIYALPLGALMFMFIMP), 439–459 (QSMLLLCLSLGAMAFFLGLEV), 467–487 (LGALASTINILVLDNPMTFHI), and 491–511 (LDSAIGQIIGCFLALMVILLI).

It belongs to the aromatic acid exporter ArAE (TC 2.A.85) family.

The protein localises to the cell inner membrane. In terms of biological role, forms an efflux pump with AaeA. Could function as a metabolic relief valve, allowing to eliminate certain compounds when they accumulate to high levels in the cell. The sequence is that of p-hydroxybenzoic acid efflux pump subunit AaeB from Pectobacterium carotovorum subsp. carotovorum (strain PC1).